We begin with the raw amino-acid sequence, 148 residues long: uncharacterized protein (148 aa).

Residues 36–45 show a composition bias toward low complexity; that stretch reads PGAPSAGPMS. The segment at 36–148 is disordered; the sequence is PGAPSAGPMS…SGTAFFPGTT (113 aa). Polar residues predominate over residues 46–55; sequence DSNSKGSTPR.

This is an uncharacterized protein from Bovine leukemia virus (isolate Japanese BLV-1) (BLV).